The following is a 216-amino-acid chain: Glycerol-3-phosphate acyltransferase (216 aa).

Transmembrane regions (helical) follow at residues 5-25 (LIAL…FGLV), 70-90 (IAAA…AGAF), 118-138 (VVFW…AAIF), 140-160 (ISSL…LAWG), and 164-184 (VAIM…ANIS). Residues 192–201 (PRIGGKKSET) are compositionally biased toward basic and acidic residues. The tract at residues 192–216 (PRIGGKKSETSADVSDGDDPDTPAT) is disordered. Positions 206 to 216 (SDGDDPDTPAT) are enriched in acidic residues.

Belongs to the PlsY family. Probably interacts with PlsX.

It is found in the cell inner membrane. The catalysed reaction is an acyl phosphate + sn-glycerol 3-phosphate = a 1-acyl-sn-glycero-3-phosphate + phosphate. It functions in the pathway lipid metabolism; phospholipid metabolism. Its function is as follows. Catalyzes the transfer of an acyl group from acyl-phosphate (acyl-PO(4)) to glycerol-3-phosphate (G3P) to form lysophosphatidic acid (LPA). This enzyme utilizes acyl-phosphate as fatty acyl donor, but not acyl-CoA or acyl-ACP. In Maricaulis maris (strain MCS10) (Caulobacter maris), this protein is Glycerol-3-phosphate acyltransferase.